A 237-amino-acid polypeptide reads, in one-letter code: U2 small nuclear ribonucleoprotein A' (237 aa).

LRR repeat units lie at residues 53-74 (RTNIVDFTNNELEELPPLGHND), 75-95 (TVHTLLLSRNRLGRLDASRLP), and 97-118 (YLVNLNLAMNRFEKFEQLQGLR). Residues 132–170 (NVICHKEQYRETVIALCPQLAVLDGERVRQAERQAAPQN) form the LRRCT domain. Residues 161-182 (QAERQAAPQNEKTDTPTEGPQP) are disordered.

This sequence belongs to the U2 small nuclear ribonucleoprotein A family. In terms of assembly, associated with the spliceosome.

It is found in the nucleus. Its function is as follows. Involved in pre-mRNA splicing. The polypeptide is U2 small nuclear ribonucleoprotein A' (LEA1) (Eremothecium gossypii (strain ATCC 10895 / CBS 109.51 / FGSC 9923 / NRRL Y-1056) (Yeast)).